The sequence spans 662 residues: Glutathione hydrolase 7 (662 aa).

The Cytoplasmic segment spans residues 1–106 (MAAENEASQE…AAECSCRQDG (106 aa)). Residues Ser-17, Ser-72, Ser-79, and Ser-83 each carry the phosphoserine modification. The interval 26-90 (SFPRLPEDEP…DGSPLRETRK (65 aa)) is disordered. Low complexity predominate over residues 72 to 83 (SSSSEMGSQDGS). The helical; Signal-anchor for type II membrane protein transmembrane segment at 107-127 (LTVIVTACLTFATGVTVALVM) threads the bilayer. The Extracellular segment spans residues 128-662 (QIYFGDPQIF…SLDATGASIL (535 aa)). Residues Asn-198, Asn-267, Asn-283, Asn-330, Asn-353, Asn-394, Asn-519, Asn-523, and Asn-586 are each glycosylated (N-linked (GlcNAc...) asparagine).

The protein belongs to the gamma-glutamyltransferase family. In terms of assembly, heterodimer composed of the light and heavy chains. The active site is located in the light chain. Cleaved by autocatalysis into a large and a small subunit and the autocatalytic cleavage is essential to the functional activation of the enzyme.

The protein resides in the membrane. It carries out the reaction an N-terminal (5-L-glutamyl)-[peptide] + an alpha-amino acid = 5-L-glutamyl amino acid + an N-terminal L-alpha-aminoacyl-[peptide]. The catalysed reaction is glutathione + H2O = L-cysteinylglycine + L-glutamate. It catalyses the reaction an S-substituted glutathione + H2O = an S-substituted L-cysteinylglycine + L-glutamate. It participates in sulfur metabolism; glutathione metabolism. Its function is as follows. Hydrolyzes and transfers gamma-glutamyl moieties from glutathione and other gamma-glutamyl compounds to acceptors. This is Glutathione hydrolase 7 from Rattus norvegicus (Rat).